Consider the following 347-residue polypeptide: GMP reductase (347 aa).

108–131 is a binding site for NADP(+); it reads ADFQKTKDVMALSDELIFICIDIA. K(+)-binding residues include G181 and G183. The active-site Thioimidate intermediate is the C186. 216-239 is an NADP(+) binding site; that stretch reads IIGDGGCTCPGDVAKAFGGGADFV.

It belongs to the IMPDH/GMPR family. GuaC type 1 subfamily. Homotetramer.

The catalysed reaction is IMP + NH4(+) + NADP(+) = GMP + NADPH + 2 H(+). Functionally, catalyzes the irreversible NADPH-dependent deamination of GMP to IMP. It functions in the conversion of nucleobase, nucleoside and nucleotide derivatives of G to A nucleotides, and in maintaining the intracellular balance of A and G nucleotides. The polypeptide is GMP reductase (Vibrio cholerae serotype O1 (strain ATCC 39541 / Classical Ogawa 395 / O395)).